The following is a 217-amino-acid chain: Translation initiation factor 6 (217 aa).

The protein belongs to the eIF-6 family.

Binds to the 50S ribosomal subunit and prevents its association with the 30S ribosomal subunit to form the 70S initiation complex. The sequence is that of Translation initiation factor 6 from Picrophilus torridus (strain ATCC 700027 / DSM 9790 / JCM 10055 / NBRC 100828 / KAW 2/3).